Here is a 414-residue protein sequence, read N- to C-terminus: Serine-type anaerobic sulfatase-maturating enzyme (414 aa).

A Radical SAM core domain is found at 5–250 (TYAPFAKPLY…LCTIFDEWVK (246 aa)). Cys-24 and Cys-28 together coordinate [4Fe-4S] cluster. Tyr-30 serves as a coordination point for S-adenosyl-L-methionine. Position 31 (Cys-31) interacts with [4Fe-4S] cluster. S-adenosyl-L-methionine is bound by residues Gly-76, Ser-131, and Arg-143. Cys-276, Cys-282, and Cys-297 together coordinate [4Fe-4S] cluster. The active-site Proton acceptor is Asp-298. Cys-339, Cys-342, Cys-348, Cys-352, and Cys-371 together coordinate [4Fe-4S] cluster.

The protein belongs to the radical SAM superfamily. Anaerobic sulfatase-maturating enzyme family. [4Fe-4S] cluster serves as cofactor.

It carries out the reaction L-seryl-[sulfatase] + S-adenosyl-L-methionine = 3-oxo-L-alanyl-[sulfatase] + 5'-deoxyadenosine + L-methionine + H(+). The protein operates within protein modification; sulfatase oxidation. Involved in 'Ser-type' sulfatase maturation under anaerobic conditions. Links the heparin and the chondroitin sulfate utilization pathways which contribute to the colonization of the intestinal tract. May catalyze the activation of chondro-6-sulfatase, i.e. the post-translational modification of a specific serine residue into 3-oxoalanine (also known as C(alpha)-formylglycine (FGly)), by a free radical chemical mechanism initiated via the reductive cleavage of S-adenosyl-L-methionine (SAM). Is also able to oxidize a cysteine residue in a synthetic substrate to FGly in vitro, but not in a recombinant Cys-type sulfatase in vivo. But since B.thetaiotaomicron possesses only Ser-type sulfatases, the oxidation of serine residues to FGly is the sole physiological activity. The polypeptide is Serine-type anaerobic sulfatase-maturating enzyme (chuR) (Bacteroides thetaiotaomicron (strain ATCC 29148 / DSM 2079 / JCM 5827 / CCUG 10774 / NCTC 10582 / VPI-5482 / E50)).